We begin with the raw amino-acid sequence, 156 residues long: Probable histone H2A.6 (156 aa).

Disordered regions lie at residues 1 to 26 (MDVG…KKPV) and 129 to 156 (KKTA…QARS). The segment covering 9–26 (AAKKAVGRKLGGPKKKPV) has biased composition (basic residues). A compositionally biased stretch (basic and acidic residues) spans 130 to 147 (KTAEKADKPAKASKDKAA). The SPKK motif motif lies at 149–152 (SPKK).

The protein belongs to the histone H2A family. As to quaternary structure, the nucleosome is a histone octamer containing two molecules each of H2A, H2B, H3 and H4 assembled in one H3-H4 heterotetramer and two H2A-H2B heterodimers. The octamer wraps approximately 147 bp of DNA.

Its subcellular location is the nucleus. It is found in the chromosome. Functionally, core component of nucleosome. Nucleosomes wrap and compact DNA into chromatin, limiting DNA accessibility to the cellular machineries which require DNA as a template. Histones thereby play a central role in transcription regulation, DNA repair, DNA replication and chromosomal stability. DNA accessibility is regulated via a complex set of post-translational modifications of histones, also called histone code, and nucleosome remodeling. The chain is Probable histone H2A.6 from Oryza sativa subsp. indica (Rice).